Reading from the N-terminus, the 200-residue chain is MAEVGLEGNQPVDLSKHPSGIVPTLQNIVSTVNLDCKLDLKAIALQARNAEYNPKRFAAVIMRIREPKTTALIFASGKMVCTGAKSEQSSKLAARKYARIIQKLGFDAKFKDFKIQNIVGSCDVKFPIRLEGLAYSHGAFSSYEPELFPGLIYRMKQPKIVLLIFVSGKIVLTGAKVRDETYTAFENIYPVLTEFRKNQQ.

2 consecutive repeat copies span residues 25–101 and 115–192.

Belongs to the TBP family. As to quaternary structure, belongs to the TFIID complex together with the TBP-associated factors (TAFs). Binds DNA as monomer.

It is found in the nucleus. Its function is as follows. General transcription factor that functions at the core of the DNA-binding multiprotein factor TFIID. Binding of TFIID to the TATA box is the initial transcriptional step of the pre-initiation complex (PIC), playing a role in the activation of eukaryotic genes transcribed by RNA polymerase II. In Nicotiana tabacum (Common tobacco), this protein is TATA-box-binding protein.